We begin with the raw amino-acid sequence, 55 residues long: Large ribosomal subunit protein bL33A (55 aa).

The protein belongs to the bacterial ribosomal protein bL33 family.

The chain is Large ribosomal subunit protein bL33A from Mycolicibacterium vanbaalenii (strain DSM 7251 / JCM 13017 / BCRC 16820 / KCTC 9966 / NRRL B-24157 / PYR-1) (Mycobacterium vanbaalenii).